The following is a 101-amino-acid chain: A-type ATP synthase subunit F (101 aa).

It belongs to the V-ATPase F subunit family. Has multiple subunits with at least A(3), B(3), C, D, E, F, H, I and proteolipid K(x).

The protein localises to the cell membrane. Its function is as follows. Component of the A-type ATP synthase that produces ATP from ADP in the presence of a proton gradient across the membrane. This is A-type ATP synthase subunit F from Archaeoglobus fulgidus (strain ATCC 49558 / DSM 4304 / JCM 9628 / NBRC 100126 / VC-16).